The following is a 444-amino-acid chain: Probable D-serine dehydratase (444 aa).

The residue at position 118 (Lys118) is an N6-(pyridoxal phosphate)lysine.

The protein belongs to the serine/threonine dehydratase family. DsdA subfamily. The cofactor is pyridoxal 5'-phosphate.

It carries out the reaction D-serine = pyruvate + NH4(+). This chain is Probable D-serine dehydratase, found in Acinetobacter baumannii (strain ACICU).